A 329-amino-acid polypeptide reads, in one-letter code: Acetyl-coenzyme A carboxylase carboxyl transferase subunit alpha (329 aa).

The region spanning 40–294 (QLETLAARRR…REALERNLSE (255 aa)) is the CoA carboxyltransferase C-terminal domain.

It belongs to the AccA family. As to quaternary structure, acetyl-CoA carboxylase is a heterohexamer composed of biotin carboxyl carrier protein (AccB), biotin carboxylase (AccC) and two subunits each of ACCase subunit alpha (AccA) and ACCase subunit beta (AccD).

The protein localises to the cytoplasm. It carries out the reaction N(6)-carboxybiotinyl-L-lysyl-[protein] + acetyl-CoA = N(6)-biotinyl-L-lysyl-[protein] + malonyl-CoA. It functions in the pathway lipid metabolism; malonyl-CoA biosynthesis; malonyl-CoA from acetyl-CoA: step 1/1. Functionally, component of the acetyl coenzyme A carboxylase (ACC) complex. First, biotin carboxylase catalyzes the carboxylation of biotin on its carrier protein (BCCP) and then the CO(2) group is transferred by the carboxyltransferase to acetyl-CoA to form malonyl-CoA. The protein is Acetyl-coenzyme A carboxylase carboxyl transferase subunit alpha of Synechococcus sp. (strain CC9311).